Reading from the N-terminus, the 433-residue chain is MKNELEFAKKLIDFIYDSPSPFHSVDNIKNTLIENGFAEIKEENKWELNKNGKYFVKRNDSALIAFTVGSGFVAKKGFKIIGGHTDSPTFRIKPNPEMVSENSYIKLNTEVYGGPILSTWFDRPLSIAGRVTVRGKSALFPETKLLNIKRPILVIPNLAIHMNRDVNSGFKINPQVDTLPIIGIINDKFEKENYLMKIIASELGEDIENIIDFDLFLYEYDKGCIMGINNEFISSSRLDDMEMVHAGLNALVNAKCSEATNVLACFDNEEIGSATKQGADSQFLSDILERIVLSFGGDREDFFRALHNSFMISSDSAHAVHPNKGEKADPITRPHINEGPVIKISAAQKYTSDSNSIAVYEEVCRLSGVPYQKFVNRSDERGGSTIGPITATHTAIRTVDIGTPLLAMHSIRELCGTLDHMYVEKSFEEFYNL.

Zn(2+) contacts are provided by histidine 84, histidine 161, and histidine 409.

It belongs to the peptidase M18 family. It depends on Zn(2+) as a cofactor.

The sequence is that of Probable M18 family aminopeptidase 2 (apeB) from Clostridium acetobutylicum (strain ATCC 824 / DSM 792 / JCM 1419 / IAM 19013 / LMG 5710 / NBRC 13948 / NRRL B-527 / VKM B-1787 / 2291 / W).